A 50-amino-acid polypeptide reads, in one-letter code: Toxic protein HokE (50 aa).

The helical transmembrane segment at 5 to 25 (YALAAVIVLCLTVLGFTLLVG) threads the bilayer.

The protein belongs to the Hok/Gef family.

Its subcellular location is the cell inner membrane. Functionally, toxic component of a type I toxin-antitoxin (TA) system; if it expressed it could be neutralized by antisense antitoxin RNA SokE. In Escherichia coli (strain K12), this protein is Toxic protein HokE.